The sequence spans 97 residues: Aspartyl/glutamyl-tRNA(Asn/Gln) amidotransferase subunit C (97 aa).

The protein belongs to the GatC family. As to quaternary structure, heterotrimer of A, B and C subunits.

It carries out the reaction L-glutamyl-tRNA(Gln) + L-glutamine + ATP + H2O = L-glutaminyl-tRNA(Gln) + L-glutamate + ADP + phosphate + H(+). The catalysed reaction is L-aspartyl-tRNA(Asn) + L-glutamine + ATP + H2O = L-asparaginyl-tRNA(Asn) + L-glutamate + ADP + phosphate + 2 H(+). In terms of biological role, allows the formation of correctly charged Asn-tRNA(Asn) or Gln-tRNA(Gln) through the transamidation of misacylated Asp-tRNA(Asn) or Glu-tRNA(Gln) in organisms which lack either or both of asparaginyl-tRNA or glutaminyl-tRNA synthetases. The reaction takes place in the presence of glutamine and ATP through an activated phospho-Asp-tRNA(Asn) or phospho-Glu-tRNA(Gln). The chain is Aspartyl/glutamyl-tRNA(Asn/Gln) amidotransferase subunit C from Synechococcus sp. (strain CC9902).